Reading from the N-terminus, the 560-residue chain is Arginine--tRNA ligase (560 aa).

A 'HIGH' region motif is present at residues 122-132 (ANPNGPLHVGH).

The protein belongs to the class-I aminoacyl-tRNA synthetase family.

The protein resides in the cytoplasm. The enzyme catalyses tRNA(Arg) + L-arginine + ATP = L-arginyl-tRNA(Arg) + AMP + diphosphate. In Methanosphaera stadtmanae (strain ATCC 43021 / DSM 3091 / JCM 11832 / MCB-3), this protein is Arginine--tRNA ligase.